A 351-amino-acid chain; its full sequence is Flagellin (351 aa).

Belongs to the bacterial flagellin family.

It is found in the secreted. Its subcellular location is the bacterial flagellum. Functionally, flagellin is the subunit protein which polymerizes to form the filaments of bacterial flagella. This Serratia marcescens protein is Flagellin (fliC).